Consider the following 76-residue polypeptide: uncharacterized protein (76 aa).

Residues 53-70 (STKLHIIWFCIFAIFIAV) traverse the membrane as a helical segment.

It localises to the membrane. This is an uncharacterized protein from Haemophilus influenzae (strain ATCC 51907 / DSM 11121 / KW20 / Rd).